Here is a 50-residue protein sequence, read N- to C-terminus: Ornatin-E (50 aa).

The Cell attachment site signature appears at 42–44 (RGD).

The protein belongs to the ornatin family.

Its subcellular location is the secreted. Potent inhibitor of fibrinogen interaction with platelet receptors expressed on glycoprotein IIb-IIIa complex. May prevent blood from clotting during either feeding and/or storage of ingested blood. The chain is Ornatin-E from Placobdella ornata (Turtle leech).